A 434-amino-acid polypeptide reads, in one-letter code: Serine--tRNA ligase (434 aa).

Position 239 to 241 (239 to 241) interacts with L-serine; sequence TAE. 270 to 272 provides a ligand contact to ATP; sequence RSE. Position 293 (Glu293) interacts with L-serine. Position 357–360 (357–360) interacts with ATP; it reads EISS. Ser393 contacts L-serine.

Belongs to the class-II aminoacyl-tRNA synthetase family. Type-1 seryl-tRNA synthetase subfamily. Homodimer. The tRNA molecule binds across the dimer.

The protein localises to the cytoplasm. It carries out the reaction tRNA(Ser) + L-serine + ATP = L-seryl-tRNA(Ser) + AMP + diphosphate + H(+). The catalysed reaction is tRNA(Sec) + L-serine + ATP = L-seryl-tRNA(Sec) + AMP + diphosphate + H(+). It functions in the pathway aminoacyl-tRNA biosynthesis; selenocysteinyl-tRNA(Sec) biosynthesis; L-seryl-tRNA(Sec) from L-serine and tRNA(Sec): step 1/1. Its function is as follows. Catalyzes the attachment of serine to tRNA(Ser). Is also able to aminoacylate tRNA(Sec) with serine, to form the misacylated tRNA L-seryl-tRNA(Sec), which will be further converted into selenocysteinyl-tRNA(Sec). This is Serine--tRNA ligase from Mesorhizobium japonicum (strain LMG 29417 / CECT 9101 / MAFF 303099) (Mesorhizobium loti (strain MAFF 303099)).